We begin with the raw amino-acid sequence, 440 residues long: tRNA(Ile)-lysidine synthase (440 aa).

31 to 36 (SGGADS) serves as a coordination point for ATP.

Belongs to the tRNA(Ile)-lysidine synthase family.

It localises to the cytoplasm. It catalyses the reaction cytidine(34) in tRNA(Ile2) + L-lysine + ATP = lysidine(34) in tRNA(Ile2) + AMP + diphosphate + H(+). Functionally, ligates lysine onto the cytidine present at position 34 of the AUA codon-specific tRNA(Ile) that contains the anticodon CAU, in an ATP-dependent manner. Cytidine is converted to lysidine, thus changing the amino acid specificity of the tRNA from methionine to isoleucine. The chain is tRNA(Ile)-lysidine synthase from Borreliella burgdorferi (strain ATCC 35210 / DSM 4680 / CIP 102532 / B31) (Borrelia burgdorferi).